Consider the following 118-residue polypeptide: NADH-ubiquinone oxidoreductase chain 3 (118 aa).

A run of 3 helical transmembrane segments spans residues 6–26 (IFVYLVISLLLSLILIGVSFL), 62–82 (LVSILFIIFDLEVTFLFPWAV), and 87–107 (IGLFGFWSMMVFLFILTIGFV).

This sequence belongs to the complex I subunit 3 family.

It is found in the mitochondrion membrane. It carries out the reaction a ubiquinone + NADH + 5 H(+)(in) = a ubiquinol + NAD(+) + 4 H(+)(out). In terms of biological role, core subunit of the mitochondrial membrane respiratory chain NADH dehydrogenase (Complex I) that is believed to belong to the minimal assembly required for catalysis. Complex I functions in the transfer of electrons from NADH to the respiratory chain. The immediate electron acceptor for the enzyme is believed to be ubiquinone. The chain is NADH-ubiquinone oxidoreductase chain 3 (ND3) from Marchantia polymorpha (Common liverwort).